A 309-amino-acid chain; its full sequence is HPr kinase/phosphorylase (309 aa).

Catalysis depends on residues His-138 and Lys-159. An ATP-binding site is contributed by 153-160; sequence GQSGVGKS. Ser-160 provides a ligand contact to Mg(2+). Residue Asp-177 is the Proton acceptor; for phosphorylation activity. Proton donor; for dephosphorylation activity of the active site. The tract at residues 201–210 is important for the catalytic mechanism of both phosphorylation and dephosphorylation; that stretch reads LEIRGLGIIN. Glu-202 lines the Mg(2+) pocket. Residue Arg-243 is part of the active site. An important for the catalytic mechanism of dephosphorylation region spans residues 264–269; it reads PVRPGR.

The protein belongs to the HPrK/P family. Homohexamer. Requires Mg(2+) as cofactor.

It catalyses the reaction [HPr protein]-L-serine + ATP = [HPr protein]-O-phospho-L-serine + ADP + H(+). The catalysed reaction is [HPr protein]-O-phospho-L-serine + phosphate + H(+) = [HPr protein]-L-serine + diphosphate. Functionally, catalyzes the ATP- as well as the pyrophosphate-dependent phosphorylation of a specific serine residue in HPr, a phosphocarrier protein of the phosphoenolpyruvate-dependent sugar phosphotransferase system (PTS). HprK/P also catalyzes the pyrophosphate-producing, inorganic phosphate-dependent dephosphorylation (phosphorolysis) of seryl-phosphorylated HPr (P-Ser-HPr). The two antagonistic activities of HprK/P are regulated by several intracellular metabolites, which change their concentration in response to the absence or presence of rapidly metabolisable carbon sources (glucose, fructose, etc.) in the growth medium. Also phosphorylates/dephosphorylates the HPr-like catabolite repression protein crh on a specific serine residue. Therefore, by controlling the phosphorylation state of HPr and crh, HPrK/P is a sensor enzyme that plays a major role in the regulation of carbon metabolism and sugar transport: it mediates carbon catabolite repression (CCR), and regulates PTS-catalyzed carbohydrate uptake and inducer exclusion. In Bacillus cereus (strain AH820), this protein is HPr kinase/phosphorylase.